We begin with the raw amino-acid sequence, 145 residues long: Large ribosomal subunit protein uL24 (145 aa).

Disordered regions lie at residues 1–21 and 122–145; these read MKFNPFVTSDRSKNRKRHFNA and KAKSRQVGKEKGKYKEETIEKMQE. Residue K136 forms a Glycyl lysine isopeptide (Lys-Gly) (interchain with G-Cter in SUMO2) linkage. At T139 the chain carries Phosphothreonine.

It belongs to the universal ribosomal protein uL24 family. Component of the large ribosomal subunit. Interacts with DHX33. In terms of processing, ufmylated by UFL1 in response to endoplasmic reticulum stress, promoting reticulophagy of endoplasmic reticulum sheets.

The protein resides in the cytoplasm. Its function is as follows. Component of the large ribosomal subunit. The ribosome is a large ribonucleoprotein complex responsible for the synthesis of proteins in the cell. This chain is Large ribosomal subunit protein uL24 (RPL26), found in Bos taurus (Bovine).